We begin with the raw amino-acid sequence, 325 residues long: Aspartate carbamoyltransferase catalytic subunit (325 aa).

Residues arginine 55 and threonine 56 each contribute to the carbamoyl phosphate site. Position 83 (lysine 83) interacts with L-aspartate. Arginine 105, histidine 135, and glutamine 138 together coordinate carbamoyl phosphate. L-aspartate is bound by residues arginine 176 and arginine 230. 2 residues coordinate carbamoyl phosphate: glycine 271 and proline 272.

The protein belongs to the aspartate/ornithine carbamoyltransferase superfamily. ATCase family. In terms of assembly, heterododecamer (2C3:3R2) of six catalytic PyrB chains organized as two trimers (C3), and six regulatory PyrI chains organized as three dimers (R2).

It carries out the reaction carbamoyl phosphate + L-aspartate = N-carbamoyl-L-aspartate + phosphate + H(+). The protein operates within pyrimidine metabolism; UMP biosynthesis via de novo pathway; (S)-dihydroorotate from bicarbonate: step 2/3. Functionally, catalyzes the condensation of carbamoyl phosphate and aspartate to form carbamoyl aspartate and inorganic phosphate, the committed step in the de novo pyrimidine nucleotide biosynthesis pathway. The sequence is that of Aspartate carbamoyltransferase catalytic subunit from Streptomyces avermitilis (strain ATCC 31267 / DSM 46492 / JCM 5070 / NBRC 14893 / NCIMB 12804 / NRRL 8165 / MA-4680).